Reading from the N-terminus, the 371-residue chain is Regulatory protein RapK (371 aa).

TPR repeat units follow at residues 7-42 (EVVA…FDEM), 93-130 (EYNF…IPDE), 175-208 (ATST…AKET), 215-248 (AQLF…ESWL), 254-290 (INSL…MENK), and 331-364 (DELS…EQKM).

This sequence belongs to the Rap family.

The protein localises to the cytoplasm. With respect to regulation, inhibited by PhrK, which prevents RapK-ComA interaction. In terms of biological role, involved in the regulation of genetic competence development. Inhibits the activity of ComA, a transcriptional factor that regulates the development of genetic competence. Likely affects the activity of additional regulators, in particular Spo0A. The protein is Regulatory protein RapK (rapK) of Bacillus subtilis (strain 168).